Consider the following 576-residue polypeptide: Rop guanine nucleotide exchange factor 13 (576 aa).

A PRONE domain is found at 119–485; that stretch reads KSCYFAYVTE…QLTQNPELAM (367 aa). Residues 557 to 570 show a composition bias toward polar residues; the sequence is KTTYLESLGTTRSP. The tract at residues 557–576 is disordered; that stretch reads KTTYLESLGTTRSPTAGRYS.

In terms of assembly, interacts with PRK6. In terms of tissue distribution, specifically expressed in mature flowers.

Guanine-nucleotide exchange factor (GEF) that acts as an activator of Rop (Rho of plants) GTPases by promoting the exchange of GDP for GTP. In Arabidopsis thaliana (Mouse-ear cress), this protein is Rop guanine nucleotide exchange factor 13.